The chain runs to 1527 residues: uncharacterized protein (1527 aa).

4 coiled-coil regions span residues 262-293 (NVEI…NINE), 699-751 (QQQQ…SEKL), 905-932 (NNLN…ENQI), and 1217-1255 (KIIS…QKSS). The segment at 683 to 734 (TNQEQEQDQQDQPPPPQQQQEQQQEQQQQQEQQQQQDQQQQDQQQDQQEKQQ) is disordered. Residues 700–728 (QQQEQQQEQQQQQEQQQQQDQQQQDQQQD) are compositionally biased toward low complexity.

This is an uncharacterized protein from Dictyostelium discoideum (Social amoeba).